Here is a 339-residue protein sequence, read N- to C-terminus: MRVYYDRDADVNLIKSKKVVIVGYGSQGRAHALNLKDSGAANVRVALREGSATVQKAQADGFEVMNVADAAKWADLMMMATPDELQADIYRDYIHNNLRDGAAIAFAHGLNVHFGLIEPKKTVDVVMIAPKGPGHTVRGEYQKGGGVPCLIAIHQDASGNAHDLALSYASGVGGGRSGVIETTFKEECETDLFGEQAVLCGGVVELIRTGFEVLVEAGYAPEMAYFECLNEMKLIVDLIYEGGIANMNYSISNTAEWGEYVTGPRIITAETKAEMKRVLKDIQTGKFTSDWMQEWKAGAARFKGIRRLNDAHQIEEVGGKLRAMMPWIEKNKLVDKARN.

The KARI N-terminal Rossmann domain occupies 1 to 182 (MRVYYDRDAD…GGGRSGVIET (182 aa)). Residues 24-27 (YGSQ), R48, S51, T53, and 83-86 (DELQ) each bind NADP(+). The active site involves H108. Position 134 (G134) interacts with NADP(+). Residues 183–328 (TFKEECETDL…GKLRAMMPWI (146 aa)) enclose the KARI C-terminal knotted domain. Mg(2+)-binding residues include D191, E195, E227, and E231. S252 contacts substrate.

The protein belongs to the ketol-acid reductoisomerase family. It depends on Mg(2+) as a cofactor.

The catalysed reaction is (2R)-2,3-dihydroxy-3-methylbutanoate + NADP(+) = (2S)-2-acetolactate + NADPH + H(+). It carries out the reaction (2R,3R)-2,3-dihydroxy-3-methylpentanoate + NADP(+) = (S)-2-ethyl-2-hydroxy-3-oxobutanoate + NADPH + H(+). It functions in the pathway amino-acid biosynthesis; L-isoleucine biosynthesis; L-isoleucine from 2-oxobutanoate: step 2/4. Its pathway is amino-acid biosynthesis; L-valine biosynthesis; L-valine from pyruvate: step 2/4. In terms of biological role, involved in the biosynthesis of branched-chain amino acids (BCAA). Catalyzes an alkyl-migration followed by a ketol-acid reduction of (S)-2-acetolactate (S2AL) to yield (R)-2,3-dihydroxy-isovalerate. In the isomerase reaction, S2AL is rearranged via a Mg-dependent methyl migration to produce 3-hydroxy-3-methyl-2-ketobutyrate (HMKB). In the reductase reaction, this 2-ketoacid undergoes a metal-dependent reduction by NADPH to yield (R)-2,3-dihydroxy-isovalerate. The polypeptide is Ketol-acid reductoisomerase (NADP(+)) (Brucella suis (strain ATCC 23445 / NCTC 10510)).